Consider the following 158-residue polypeptide: Ribosomal RNA large subunit methyltransferase H (158 aa).

Residues Leu72, Gly103, and 122-127 (LGNLTL) contribute to the S-adenosyl-L-methionine site.

The protein belongs to the RNA methyltransferase RlmH family. As to quaternary structure, homodimer.

Its subcellular location is the cytoplasm. The catalysed reaction is pseudouridine(1915) in 23S rRNA + S-adenosyl-L-methionine = N(3)-methylpseudouridine(1915) in 23S rRNA + S-adenosyl-L-homocysteine + H(+). Functionally, specifically methylates the pseudouridine at position 1915 (m3Psi1915) in 23S rRNA. The polypeptide is Ribosomal RNA large subunit methyltransferase H (Acidiphilium cryptum (strain JF-5)).